A 254-amino-acid polypeptide reads, in one-letter code: Undecaprenyl-diphosphatase (254 aa).

8 consecutive transmembrane segments (helical) span residues 1–21 (MDII…FLPI), 41–61 (LTKA…MLIY), 70–90 (IDLW…GFIF), 97–117 (LFNV…FLIV), 134–154 (VSWT…IPGT), 175–195 (AEFS…YDLL), 209–229 (FLIG…LFLV), and 234–254 (FTFV…LMIL).

Belongs to the UppP family.

The protein localises to the cell inner membrane. It catalyses the reaction di-trans,octa-cis-undecaprenyl diphosphate + H2O = di-trans,octa-cis-undecaprenyl phosphate + phosphate + H(+). Catalyzes the dephosphorylation of undecaprenyl diphosphate (UPP). Confers resistance to bacitracin. The sequence is that of Undecaprenyl-diphosphatase from Sulfurovum sp. (strain NBC37-1).